The sequence spans 174 residues: RNA polymerase sigma factor CarQ (174 aa).

Residues 39–52 (DLLQATFLSVIRSR) carry the Polymerase core binding motif. Positions 86–106 (YASREDTATPASAAPDDSDPS) are disordered. The H-T-H motif DNA-binding region spans 136–155 (FEEIGALRGISPGAARLRAH).

It belongs to the sigma-70 factor family. ECF subfamily.

Functionally, sigma factors are initiation factors that promote the attachment of RNA polymerase to specific initiation sites and are then released. This sigma factor regulates genes for the light induced biosynthesis of carotenoids. The chain is RNA polymerase sigma factor CarQ (carQ) from Myxococcus xanthus.